The sequence spans 270 residues: tRNA pseudouridine synthase A (270 aa).

Catalysis depends on Asp60, which acts as the Nucleophile. The RNA binding stretch occupies residues 107–111 (FHARF). Tyr118 provides a ligand contact to substrate. The tract at residues 168 to 172 (QCQSR) is interaction with tRNA.

This sequence belongs to the tRNA pseudouridine synthase TruA family. As to quaternary structure, homodimer.

The catalysed reaction is uridine(38/39/40) in tRNA = pseudouridine(38/39/40) in tRNA. Its function is as follows. Formation of pseudouridine at positions 38, 39 and 40 in the anticodon stem and loop of transfer RNAs. This is tRNA pseudouridine synthase A from Enterobacter sp. (strain 638).